The chain runs to 343 residues: Allergin-1 (343 aa).

The signal sequence occupies residues 1 to 19; it reads MWSHLNRLLFWSIFSSVTC. Residues 20-227 are Extracellular-facing; sequence RKAVLDCEAM…GGDSCPFCLK (208 aa). Ig-like C2-type domains follow at residues 35–118 and 128–213; these read PSPC…RDFS and PVLN…HPVT. N-linked (GlcNAc...) asparagine glycans are attached at residues N51, N60, N89, N151, N157, and N182. 2 disulfide bridges follow: C56-C103 and C147-C196. Residues 228–248 traverse the membrane as a helical segment; the sequence is LLLPGLLLLLVVIILILAFWV. Residues 249–343 lie on the Cytoplasmic side of the membrane; that stretch reads LPKYKTRKAM…SGYVYSELNF (95 aa). 2 consecutive short sequence motifs (ITIM motif) follow at residues 311–316 and 336–341; these read LQYATP and YVYSEL. Residues Y313 and Y338 each carry the phosphotyrosine modification.

In terms of assembly, monomer. Interacts (tyrosine-phosphorylated) with PTPN6, PTPN11 and INPP5D. N-glycosylated. As to expression, expressed in myeloid cells (dendritic cells, macrophages and neutrophils, weak expression on B-cells but not in T-cells or natural killer cells), peripheral blood basophils and mast cells (at protein level).

It is found in the cell membrane. Immunoglobulin-like receptor which plays an inhibitory role in degranulation of mast cells. Negatively regulates IgE-mediated mast cell activation and suppresses the type I immediate hypersensitivity reaction. This chain is Allergin-1 (MILR1), found in Homo sapiens (Human).